The chain runs to 583 residues: Putative amidase C869.01 (583 aa).

The N-terminal stretch at 1–19 (MKLQLLFLTLAQLAKHGLA) is a signal peptide. Active-site charge relay system residues include Lys141 and Ser222. Catalysis depends on Ser246, which acts as the Acyl-ester intermediate.

Belongs to the amidase family.

It is found in the cytoplasm. The catalysed reaction is a monocarboxylic acid amide + H2O = a monocarboxylate + NH4(+). The sequence is that of Putative amidase C869.01 from Schizosaccharomyces pombe (strain 972 / ATCC 24843) (Fission yeast).